We begin with the raw amino-acid sequence, 227 residues long: Large ribosomal subunit protein bL25 (227 aa).

This sequence belongs to the bacterial ribosomal protein bL25 family. CTC subfamily. Part of the 50S ribosomal subunit; part of the 5S rRNA/L5/L18/L25 subcomplex. Contacts the 5S rRNA. Binds to the 5S rRNA independently of L5 and L18.

In terms of biological role, this is one of the proteins that binds to the 5S RNA in the ribosome where it forms part of the central protuberance. This is Large ribosomal subunit protein bL25 from Polaromonas sp. (strain JS666 / ATCC BAA-500).